The primary structure comprises 411 residues: Tyrosine--tRNA ligase (411 aa).

Position 33 (Y33) interacts with L-tyrosine. A 'HIGH' region motif is present at residues P38 to N47. Residues Y160 and Q164 each contribute to the L-tyrosine site. The 'KMSKS' region signature appears at K222–S226. K225 provides a ligand contact to ATP. The S4 RNA-binding domain occupies S347–V411.

Belongs to the class-I aminoacyl-tRNA synthetase family. TyrS type 1 subfamily. Homodimer.

The protein localises to the cytoplasm. The enzyme catalyses tRNA(Tyr) + L-tyrosine + ATP = L-tyrosyl-tRNA(Tyr) + AMP + diphosphate + H(+). Catalyzes the attachment of tyrosine to tRNA(Tyr) in a two-step reaction: tyrosine is first activated by ATP to form Tyr-AMP and then transferred to the acceptor end of tRNA(Tyr). The protein is Tyrosine--tRNA ligase of Mycoplasmopsis agalactiae (strain NCTC 10123 / CIP 59.7 / PG2) (Mycoplasma agalactiae).